We begin with the raw amino-acid sequence, 388 residues long: Xylose isomerase (388 aa).

Residues His54 and Asp57 contribute to the active site. Residues Glu181, Glu217, His220, Asp245, Asp255, Asp257, and Asp287 each contribute to the Mg(2+) site.

Belongs to the xylose isomerase family. Homotetramer. Mg(2+) is required as a cofactor.

Its subcellular location is the cytoplasm. The enzyme catalyses alpha-D-xylose = alpha-D-xylulofuranose. This chain is Xylose isomerase, found in Streptomyces corchorusii (Streptomyces chibaensis).